Reading from the N-terminus, the 729-residue chain is Ribosomal RNA large subunit methyltransferase K/L (729 aa).

Positions 47–158 (TFYRLCLWSR…KNELTLALDL (112 aa)) constitute a THUMP domain.

It belongs to the methyltransferase superfamily. RlmKL family.

It is found in the cytoplasm. It carries out the reaction guanosine(2445) in 23S rRNA + S-adenosyl-L-methionine = N(2)-methylguanosine(2445) in 23S rRNA + S-adenosyl-L-homocysteine + H(+). The enzyme catalyses guanosine(2069) in 23S rRNA + S-adenosyl-L-methionine = N(2)-methylguanosine(2069) in 23S rRNA + S-adenosyl-L-homocysteine + H(+). In terms of biological role, specifically methylates the guanine in position 2445 (m2G2445) and the guanine in position 2069 (m7G2069) of 23S rRNA. In Dichelobacter nodosus (strain VCS1703A), this protein is Ribosomal RNA large subunit methyltransferase K/L.